Reading from the N-terminus, the 322-residue chain is CRISPR-associated protein Cas1 1 (322 aa).

Residues Glu-149, His-214, and Glu-229 each coordinate Mn(2+).

Belongs to the CRISPR-associated endonuclease Cas1 family. As to quaternary structure, homodimer, forms a heterotetramer with a Cas2 homodimer. Requires Mg(2+) as cofactor. Mn(2+) serves as cofactor.

Functionally, CRISPR (clustered regularly interspaced short palindromic repeat), is an adaptive immune system that provides protection against mobile genetic elements (viruses, transposable elements and conjugative plasmids). CRISPR clusters contain spacers, sequences complementary to antecedent mobile elements, and target invading nucleic acids. CRISPR clusters are transcribed and processed into CRISPR RNA (crRNA). Acts as a dsDNA endonuclease. Involved in the integration of spacer DNA into the CRISPR cassette. This is CRISPR-associated protein Cas1 1 from Methanobrevibacter ruminantium (strain ATCC 35063 / DSM 1093 / JCM 13430 / OCM 146 / M1) (Methanobacterium ruminantium).